We begin with the raw amino-acid sequence, 113 residues long: Small ribosomal subunit protein bS16 (113 aa).

The interval 84 to 113 (PKPAYTEQPKKSAPKKRAQERAAAAAAAAA) is disordered.

The protein belongs to the bacterial ribosomal protein bS16 family.

The protein is Small ribosomal subunit protein bS16 of Gluconacetobacter diazotrophicus (strain ATCC 49037 / DSM 5601 / CCUG 37298 / CIP 103539 / LMG 7603 / PAl5).